The chain runs to 579 residues: Adenine deaminase (579 aa).

This sequence belongs to the metallo-dependent hydrolases superfamily. Adenine deaminase family. Requires Mn(2+) as cofactor.

The catalysed reaction is adenine + H2O + H(+) = hypoxanthine + NH4(+). This Listeria monocytogenes serotype 4b (strain F2365) protein is Adenine deaminase.